Consider the following 206-residue polypeptide: Large ribosomal subunit protein uL4 (206 aa).

It belongs to the universal ribosomal protein uL4 family. As to quaternary structure, part of the 50S ribosomal subunit.

One of the primary rRNA binding proteins, this protein initially binds near the 5'-end of the 23S rRNA. It is important during the early stages of 50S assembly. It makes multiple contacts with different domains of the 23S rRNA in the assembled 50S subunit and ribosome. Functionally, forms part of the polypeptide exit tunnel. This is Large ribosomal subunit protein uL4 from Paracoccus denitrificans (strain Pd 1222).